Reading from the N-terminus, the 641-residue chain is Mediator of RNA polymerase II transcription subunit 17 (641 aa).

A coiled-coil region spans residues 159 to 186 (RLQSFNAAADKLLKSAARLETEVASETR).

The protein belongs to the Mediator complex subunit 17 family. In terms of assembly, component of the Mediator complex.

The protein localises to the nucleus. Component of the Mediator complex, a coactivator involved in the regulated transcription of nearly all RNA polymerase II-dependent genes. Mediator functions as a bridge to convey information from gene-specific regulatory proteins to the basal RNA polymerase II transcription machinery. Mediator is recruited to promoters by direct interactions with regulatory proteins and serves as a scaffold for the assembly of a functional preinitiation complex with RNA polymerase II and the general transcription factors. The polypeptide is Mediator of RNA polymerase II transcription subunit 17 (srb4) (Aspergillus clavatus (strain ATCC 1007 / CBS 513.65 / DSM 816 / NCTC 3887 / NRRL 1 / QM 1276 / 107)).